The sequence spans 291 residues: Formamidopyrimidine-DNA glycosylase (291 aa).

Proline 2 acts as the Schiff-base intermediate with DNA in catalysis. Glutamate 3 functions as the Proton donor in the catalytic mechanism. Lysine 60 acts as the Proton donor; for beta-elimination activity in catalysis. Residues histidine 108 and arginine 127 each coordinate DNA. The FPG-type zinc finger occupies 257 to 291; the sequence is WVYRRGGQACRICSTPIRRESLCGRGTHWCPNCQR. Arginine 281 acts as the Proton donor; for delta-elimination activity in catalysis.

The protein belongs to the FPG family. In terms of assembly, monomer. The cofactor is Zn(2+).

It carries out the reaction Hydrolysis of DNA containing ring-opened 7-methylguanine residues, releasing 2,6-diamino-4-hydroxy-5-(N-methyl)formamidopyrimidine.. It catalyses the reaction 2'-deoxyribonucleotide-(2'-deoxyribose 5'-phosphate)-2'-deoxyribonucleotide-DNA = a 3'-end 2'-deoxyribonucleotide-(2,3-dehydro-2,3-deoxyribose 5'-phosphate)-DNA + a 5'-end 5'-phospho-2'-deoxyribonucleoside-DNA + H(+). Involved in base excision repair of DNA damaged by oxidation or by mutagenic agents. Acts as a DNA glycosylase that recognizes and removes damaged bases. Has a preference for oxidized purines, such as 7,8-dihydro-8-oxoguanine (8-oxoG). Has AP (apurinic/apyrimidinic) lyase activity and introduces nicks in the DNA strand. Cleaves the DNA backbone by beta-delta elimination to generate a single-strand break at the site of the removed base with both 3'- and 5'-phosphates. In Prochlorococcus marinus (strain MIT 9313), this protein is Formamidopyrimidine-DNA glycosylase.